The chain runs to 207 residues: FMN-dependent NADH:quinone oxidoreductase 1 (207 aa).

FMN contacts are provided by residues S9, 15-17 (SIS), and 139-142 (TRGG).

It belongs to the azoreductase type 1 family. In terms of assembly, homodimer. The cofactor is FMN.

The enzyme catalyses 2 a quinone + NADH + H(+) = 2 a 1,4-benzosemiquinone + NAD(+). It carries out the reaction N,N-dimethyl-1,4-phenylenediamine + anthranilate + 2 NAD(+) = 2-(4-dimethylaminophenyl)diazenylbenzoate + 2 NADH + 2 H(+). Functionally, quinone reductase that provides resistance to thiol-specific stress caused by electrophilic quinones. Also exhibits azoreductase activity. Catalyzes the reductive cleavage of the azo bond in aromatic azo compounds to the corresponding amines. The sequence is that of FMN-dependent NADH:quinone oxidoreductase 1 from Trichormus variabilis (strain ATCC 29413 / PCC 7937) (Anabaena variabilis).